A 112-amino-acid polypeptide reads, in one-letter code: Cell cycle protein GpsB (112 aa).

The stretch at 42 to 77 forms a coiled coil; sequence YQKMADMNNEVVKLSEENHKLKKELEELRLRVATSR. The interval 74 to 96 is disordered; the sequence is ATSRPQDNKNFSSNNSSSASNNV. A compositionally biased stretch (low complexity) spans 81–95; that stretch reads NKNFSSNNSSSASNN.

The protein belongs to the GpsB family. In terms of assembly, forms polymers through the coiled coil domains. Interacts with PBP1, MreC and EzrA.

It localises to the cytoplasm. Its function is as follows. Divisome component that associates with the complex late in its assembly, after the Z-ring is formed, and is dependent on DivIC and PBP2B for its recruitment to the divisome. Together with EzrA, is a key component of the system that regulates PBP1 localization during cell cycle progression. Its main role could be the removal of PBP1 from the cell pole after pole maturation is completed. Also contributes to the recruitment of PBP1 to the division complex. Not essential for septum formation. The polypeptide is Cell cycle protein GpsB (Staphylococcus epidermidis (strain ATCC 12228 / FDA PCI 1200)).